A 211-amino-acid polypeptide reads, in one-letter code: High frequency lysogenization protein HflD homolog (211 aa).

This sequence belongs to the HflD family.

The protein resides in the cytoplasm. It localises to the cell membrane. In Buchnera aphidicola subsp. Acyrthosiphon pisum (strain 5A), this protein is High frequency lysogenization protein HflD homolog.